Reading from the N-terminus, the 238-residue chain is Ribosomal RNA small subunit methyltransferase G (238 aa).

Residues Gly77, Phe82, 128–129, and Arg147 contribute to the S-adenosyl-L-methionine site; that span reads AE.

The protein belongs to the methyltransferase superfamily. RNA methyltransferase RsmG family.

The protein resides in the cytoplasm. Specifically methylates the N7 position of guanine in position 535 of 16S rRNA. The chain is Ribosomal RNA small subunit methyltransferase G from Listeria monocytogenes serotype 4b (strain CLIP80459).